Here is a 338-residue protein sequence, read N- to C-terminus: Gibberellin 2-beta-dioxygenase 8 (338 aa).

One can recognise a Fe2OG dioxygenase domain in the interval 191 to 290 (NTCYLRMNRY…RFSTAYFMCP (100 aa)). H215, D217, and H271 together coordinate Fe cation. Residue R281 is part of the active site. A 2-oxoglutarate-binding site is contributed by R281.

This sequence belongs to the iron/ascorbate-dependent oxidoreductase family. GA2OX subfamily. It depends on Fe(2+) as a cofactor.

The enzyme catalyses gibberellin A1 + 2-oxoglutarate + O2 = gibberellin A8 + succinate + CO2. It participates in plant hormone biosynthesis; gibberellin biosynthesis. In terms of biological role, catalyzes the 2-beta-hydroxylation of gibberellins (GA) precursors, rendering them unable to be converted to active GAs. Hydroxylates the C20-GA GA12 and GA53, but is not active on C19-GAs, like GA1, GA4, GA9 and GA20. This chain is Gibberellin 2-beta-dioxygenase 8 (GA2OX8), found in Arabidopsis thaliana (Mouse-ear cress).